The following is a 425-amino-acid chain: Ribosome biogenesis protein WDR12 homolog (425 aa).

The ubiquitin-like (UBL) domain stretch occupies residues 13 to 94 (LQLHLITKQK…EDTVELEYVE (82 aa)). WD repeat units follow at residues 106 to 143 (LHDD…KLTI), 145 to 187 (GHIA…NSVE), 194 to 233 (GHER…GGGD), 258 to 296 (GHRE…IKSE), 298 to 337 (SGNK…GTLV), 343 to 383 (GHTQ…APIF), and 387 to 425 (GHED…GGEK). A disordered region spans residues 227–247 (VRSGGGDSEPSTSKRQKLDQG).

The protein belongs to the WD repeat WDR12/YTM1 family.

The protein resides in the nucleus. It is found in the nucleolus. It localises to the nucleoplasm. In terms of biological role, required for maturation of ribosomal RNAs and formation of the large ribosomal subunit. This is Ribosome biogenesis protein WDR12 homolog from Culex quinquefasciatus (Southern house mosquito).